The sequence spans 597 residues: Cytosolic Fe-S cluster assembly factor nar1 (597 aa).

6 residues coordinate [4Fe-4S] cluster: Cys-20, Cys-62, Cys-65, Cys-68, Cys-216, and Cys-271. Positions 428–449 (RASRLPGGNRRLPVGRGAASGS) are disordered. [4Fe-4S] cluster is bound by residues Cys-462 and Cys-466. The tract at residues 479 to 505 (REASSSVQSSTSAEVPDSSSKPTPHEQ) is disordered.

This sequence belongs to the NARF family.

Functionally, component of the cytosolic Fe/S protein assembly machinery. Required for maturation of extramitochondrial Fe/S proteins. May play a role in the transfer of pre-assembled Fe/S clusters to target apoproteins. This is Cytosolic Fe-S cluster assembly factor nar1 (nar1) from Aspergillus niger (strain ATCC MYA-4892 / CBS 513.88 / FGSC A1513).